Here is a 118-residue protein sequence, read N- to C-terminus: Cell division protein FtsB (118 aa).

The Cytoplasmic portion of the chain corresponds to 1 to 6; the sequence is MRNWRW. A helical membrane pass occupies residues 7–24; the sequence is LLLVLAALLAWLQHRFWF. Residues 25-118 lie on the Periplasmic side of the membrane; that stretch reads GPGNSGEVRM…DLSQPRREKR (94 aa). Positions 30 to 66 form a coiled coil; the sequence is GEVRMLQVQIVQQHQENERLRQRNASLAAEVKNLKDG. The tract at residues 98–118 is disordered; sequence LPNDTSADHGVDLSQPRREKR. Over residues 103 to 118 the composition is skewed to basic and acidic residues; that stretch reads SADHGVDLSQPRREKR.

It belongs to the FtsB family. In terms of assembly, part of a complex composed of FtsB, FtsL and FtsQ.

The protein localises to the cell inner membrane. Essential cell division protein. May link together the upstream cell division proteins, which are predominantly cytoplasmic, with the downstream cell division proteins, which are predominantly periplasmic. The polypeptide is Cell division protein FtsB (Xylella fastidiosa (strain M12)).